The primary structure comprises 121 residues: MPDLNKIIEDLSSLTVVEAAELSKQLEEKWGVTAMAAAAPAAAAGGAAEEAKDDFTIMLISAGDKKINVIKEVRAATSLGLKEAKDLVEGAPKEVKSGVNKKDAEEIKAKLEAAGAKVELK.

The protein belongs to the bacterial ribosomal protein bL12 family. Homodimer. Part of the ribosomal stalk of the 50S ribosomal subunit. Forms a multimeric L10(L12)X complex, where L10 forms an elongated spine to which 2 to 4 L12 dimers bind in a sequential fashion. Binds GTP-bound translation factors.

Forms part of the ribosomal stalk which helps the ribosome interact with GTP-bound translation factors. Is thus essential for accurate translation. The polypeptide is Large ribosomal subunit protein bL12 (Pelagibacter ubique (strain HTCC1062)).